The following is a 63-amino-acid chain: Kappa-theraphotoxin-Gr3a (63 aa).

Positions 1-21 (MKTSVFVLVLGLVLLFAVSFA) are cleaved as a signal peptide. A propeptide spanning residues 22–29 (TEMEESAR) is cleaved from the precursor. Disulfide bonds link C31–C45, C38–C50, and C44–C57.

It belongs to the neurotoxin 10 (Hwtx-1) family. 63 (VsTx1) subfamily. Expressed by the venom gland.

Its subcellular location is the secreted. Functionally, inhibits sodium channels Nav1.7/SCN9A and potassium channels Kv11.1/KCNH2. Also binds the voltage-sensor domain of the potassium channel KvAP (from the archaeon Aeropyrum pernix) with very slow apparent binding kinetics and affects channel gating. Reaches its target by dynamically partitioning into anionic or zwitterionic headgroup lipid membranes. May bind to the open state of KvAP. In Grammostola rosea (Chilean rose tarantula), this protein is Kappa-theraphotoxin-Gr3a.